The primary structure comprises 204 residues: Large ribosomal subunit protein uL4 (204 aa).

The disordered stretch occupies residues 53–74; sequence AYVSGGGKKPWRQKGRGGARAG.

The protein belongs to the universal ribosomal protein uL4 family. In terms of assembly, part of the 50S ribosomal subunit.

In terms of biological role, one of the primary rRNA binding proteins, this protein initially binds near the 5'-end of the 23S rRNA. It is important during the early stages of 50S assembly. It makes multiple contacts with different domains of the 23S rRNA in the assembled 50S subunit and ribosome. Forms part of the polypeptide exit tunnel. The chain is Large ribosomal subunit protein uL4 from Campylobacter curvus (strain 525.92).